A 312-amino-acid polypeptide reads, in one-letter code: Olfactory receptor 4F6 (312 aa).

The Extracellular portion of the chain corresponds to 1 to 25 (MDEANHSVVSEFVFLGLSDSRKIQL). Asn-5 carries an N-linked (GlcNAc...) asparagine glycan. Residues 26 to 49 (LLFLFFSVFYVSSLMGNLLIVLTV) traverse the membrane as a helical segment. Topologically, residues 50 to 57 (TSDPRLQS) are cytoplasmic. A helical membrane pass occupies residues 58–79 (PMYFLLANLSIINLVFCSSTAP). Residues 80-100 (KMIYDLFRKHKTISFGGCVVQ) lie on the Extracellular side of the membrane. A disulfide bridge links Cys-97 with Cys-189. Residues 101 to 120 (IFFIHAVGGTEMVLLIAMAF) form a helical membrane-spanning segment. The Cytoplasmic segment spans residues 121–139 (DRYVAICKPLHYLTIMNPQ). A helical transmembrane segment spans residues 140–158 (RCILFLVISWIIGIIHSVI). Topologically, residues 159–195 (QLAFVVDLLFCGPNELDSFFCDLPRFIKLACIETYTL) are extracellular. Residues 196 to 219 (GFMVTANSGFISLASFLILIISYI) traverse the membrane as a helical segment. The Cytoplasmic portion of the chain corresponds to 220-235 (FILVTVQKKSSGGIFK). The helical transmembrane segment at 236-258 (AFSMLSAHVIVVVLVFGPLIFFY) threads the bilayer. Over 259-269 (IFPFPTSHLDK) the chain is Extracellular. A helical transmembrane segment spans residues 270–289 (FLAIFDAVITPVLNPVIYTF). At 290–312 (RNKEMMVAMRRRCSQFVNYSKIF) the chain is on the cytoplasmic side.

It belongs to the G-protein coupled receptor 1 family.

It localises to the cell membrane. Functionally, odorant receptor. The protein is Olfactory receptor 4F6 (OR4F6) of Homo sapiens (Human).